Reading from the N-terminus, the 304-residue chain is Acetyl-coenzyme A carboxylase carboxyl transferase subunit beta (304 aa).

The region spanning 23 to 292 (VWTKCDSCGQ…PNPEAPREGV (270 aa)) is the CoA carboxyltransferase N-terminal domain. Positions 27, 30, 46, and 49 each coordinate Zn(2+). The segment at 27–49 (CDSCGQVLYRAELERNLEVCPKC) adopts a C4-type zinc-finger fold. The segment at 284–304 (NPEAPREGVVVPPVPDQEPEA) is disordered. Positions 295–304 (PPVPDQEPEA) are enriched in pro residues.

Belongs to the AccD/PCCB family. As to quaternary structure, acetyl-CoA carboxylase is a heterohexamer composed of biotin carboxyl carrier protein (AccB), biotin carboxylase (AccC) and two subunits each of ACCase subunit alpha (AccA) and ACCase subunit beta (AccD). It depends on Zn(2+) as a cofactor.

Its subcellular location is the cytoplasm. The enzyme catalyses N(6)-carboxybiotinyl-L-lysyl-[protein] + acetyl-CoA = N(6)-biotinyl-L-lysyl-[protein] + malonyl-CoA. The protein operates within lipid metabolism; malonyl-CoA biosynthesis; malonyl-CoA from acetyl-CoA: step 1/1. Functionally, component of the acetyl coenzyme A carboxylase (ACC) complex. Biotin carboxylase (BC) catalyzes the carboxylation of biotin on its carrier protein (BCCP) and then the CO(2) group is transferred by the transcarboxylase to acetyl-CoA to form malonyl-CoA. The chain is Acetyl-coenzyme A carboxylase carboxyl transferase subunit beta from Shigella flexneri serotype 5b (strain 8401).